A 245-amino-acid polypeptide reads, in one-letter code: MKIDIIGDIHGCYSEFVKLTKKLGYEWDSGIPLHPDGRKLGFVGDLTDRGPQSLQTVEVVYSLVERESAYYVPGNHCNKLYRFFLGRNVQITHGLETTVEEYRALPPSEQAMIRKKFMRLYEAAPLYAQLDNGRLIIAHAGLRRDYIGRNDKKVQTFVLYGDITGETNPDGTPVRRDWAKRYKGSAWIVYGHTPVKQPRIINRTINIDTGCVFGGALTAFRYPEIETISVPSSLPYVPEKFRTFD.

Belongs to the PrpE family. Ni(2+) is required as a cofactor.

The enzyme catalyses P(1),P(4)-bis(5'-guanosyl) tetraphosphate + H2O = GMP + GTP + 2 H(+). Its function is as follows. Asymmetrically hydrolyzes Ap4p to yield AMP and ATP. The polypeptide is Bis(5'-nucleosyl)-tetraphosphatase PrpE [asymmetrical] (Geobacillus sp. (strain WCH70)).